A 346-amino-acid polypeptide reads, in one-letter code: MALLLPLAVLLAACRPGHGFSGGCDTCGLRPVAYHYGGMRVVGGTEALHGSWPWIVSIQNPRFAGTGHMCGGSLITPQWVLSAAHCFGRPNYILQSRVVIGANDLTQLGQEVEVRSIRRAILHEYFNNKTMINDIALLELDRPVHCSYYIQLACVPDPSLRVSELTDCYVSGWGHMGMRSAAPTQTAEVLQEAKVHLLDLNLCNSSHWYDGVLHSHNLCAGYPQGGIDTCQGDSGGPLMCRDSSADYFWLVGVTSWGRGCGRAFRPGIYTSTQHFYNWILLQVRAAAHPTSRTWSHYMSTSSYHHGPNAVPTQPSVSDSCPFPAQKLREFFTGVQNLLQSLWGSKA.

Positions 1-19 (MALLLPLAVLLAACRPGHG) are cleaved as a signal peptide. 6 cysteine pairs are disulfide-bonded: Cys-24-Cys-146, Cys-27-Cys-154, Cys-70-Cys-86, Cys-168-Cys-240, Cys-203-Cys-219, and Cys-230-Cys-260. The Peptidase S1 domain occupies 41 to 284 (VVGGTEALHG…FYNWILLQVR (244 aa)). His-85 functions as the Charge relay system in the catalytic mechanism. Asn-128 carries N-linked (GlcNAc...) asparagine glycosylation. The active-site Charge relay system is Asp-134. N-linked (GlcNAc...) asparagine glycosylation occurs at Asn-204. Ser-234 functions as the Charge relay system in the catalytic mechanism. Positions 266–346 (PGIYTSTQHF…LLQSLWGSKA (81 aa)) are excised as a propeptide.

The protein belongs to the peptidase S1 family. In terms of assembly, heavy chain (catalytic) and a light chain linked by two disulfide bonds. Glycosylated.

It carries out the reaction Preferential cleavage: Arg-|-Xaa, Lys-|-Xaa.. With respect to regulation, inhibited by aprotinin, ovomucoid, soybean trypsin inhibitor, benzamidine, p-aminobenzamidine, and zinc ions. Activity also inhibited by a Kazal-type proteinase inhibitor. In terms of biological role, serine protease of trypsin-like cleavage specificity. Synthesized in a zymogen form, proacrosin and stored in the acrosome. The protein is Acrosin of Meleagris gallopavo (Wild turkey).